The chain runs to 71 residues: Large ribosomal subunit protein bL31 (71 aa).

Positions 16, 18, 37, and 40 each coordinate Zn(2+).

The protein belongs to the bacterial ribosomal protein bL31 family. Type A subfamily. In terms of assembly, part of the 50S ribosomal subunit. Zn(2+) serves as cofactor.

Functionally, binds the 23S rRNA. The polypeptide is Large ribosomal subunit protein bL31 (Pseudomonas putida (strain W619)).